The primary structure comprises 149 residues: Calmodulin (149 aa).

Alanine 2 is subject to N-acetylalanine. 4 EF-hand domains span residues 8-43 (EQIA…LGQN), 44-79 (PTEA…KMKD), 81-116 (DSEE…LGEK), and 117-149 (LTDE…MTNK). Residues aspartate 21, aspartate 23, aspartate 25, threonine 27, glutamate 32, aspartate 57, aspartate 59, asparagine 61, threonine 63, glutamate 68, aspartate 94, aspartate 96, asparagine 98, and glutamate 105 each contribute to the Ca(2+) site. Position 116 is an N6,N6,N6-trimethyllysine (lysine 116). Positions 130, 132, 134, 136, and 141 each coordinate Ca(2+).

Belongs to the calmodulin family.

Calmodulin mediates the control of a large number of enzymes, ion channels and other proteins by Ca(2+). Among the enzymes to be stimulated by the calmodulin-Ca(2+) complex are a number of protein kinases and phosphatases. This is Calmodulin from Ciona intestinalis (Transparent sea squirt).